Consider the following 363-residue polypeptide: Dihydroorotate dehydrogenase (quinone) (363 aa).

FMN-binding positions include Ala67–Lys71 and Thr91. Substrate is bound at residue Lys71. Substrate is bound at residue Asn116–Phe120. Asn145 and Asn178 together coordinate FMN. Residue Asn178 participates in substrate binding. The Nucleophile role is filled by Ser181. A substrate-binding site is contributed by Asn183. The FMN site is built by Lys219 and Thr247. Position 248 to 249 (Asn248 to Thr249) interacts with substrate. Residues Gly268, Gly297, and Tyr318–Thr319 contribute to the FMN site.

This sequence belongs to the dihydroorotate dehydrogenase family. Type 2 subfamily. As to quaternary structure, monomer. Requires FMN as cofactor.

It localises to the cell membrane. It catalyses the reaction (S)-dihydroorotate + a quinone = orotate + a quinol. It functions in the pathway pyrimidine metabolism; UMP biosynthesis via de novo pathway; orotate from (S)-dihydroorotate (quinone route): step 1/1. Its function is as follows. Catalyzes the conversion of dihydroorotate to orotate with quinone as electron acceptor. The chain is Dihydroorotate dehydrogenase (quinone) from Myxococcus xanthus (strain DK1622).